We begin with the raw amino-acid sequence, 316 residues long: Leucine-rich repeat-containing protein 73 (316 aa).

LRR repeat units lie at residues 57-78 (SLAQLNLNLGVVSSPSRIKQLA), 86-106 (SIQSLFLHGSPLTDAGLALLN), 114-137 (ALVALDLGDCMLGDEAINLICGLL), 145-166 (GLKELTLSANPGITPKGWSRLA), 174-187 (QVRVLNLDYNPLGD), 202-223 (TLEVLDLEGTGLTNQSAQTLLD), and 231-250 (ALRSLVLAENSISPELQQQI). Residues 257–296 (GEEEEEMAGGAADTQEWGRGREPAAHQRGGSSWKCPSDPN) are disordered. The segment covering 272–281 (EWGRGREPAA) has biased composition (basic and acidic residues).

This is Leucine-rich repeat-containing protein 73 (Lrrc73) from Rattus norvegicus (Rat).